A 105-amino-acid polypeptide reads, in one-letter code: Large ribosomal subunit protein P1 (105 aa).

Met1 bears the Blocked amino end (Met) mark. The segment covering 65–76 (VAAPAGQQTQQA) has biased composition (low complexity). Residues 65–105 (VAAPAGQQTQQAAEKKEEKKEEEKKGPSEEEIGGGLSSLFG) form a disordered region. Positions 77 to 92 (AEKKEEKKEEEKKGPS) are enriched in basic and acidic residues.

Belongs to the eukaryotic ribosomal protein P1/P2 family. In terms of assembly, part of the 50S ribosomal subunit. Homodimer, it forms part of the ribosomal stalk which helps the ribosome interact with GTP-bound translation factors. Forms a heptameric uL10/P0(P1)2(P1)2(P1)2 complex, where uL10/P0 forms an elongated spine to which the P1 dimers bind in a sequential fashion.

Its function is as follows. Forms part of the ribosomal stalk, playing a central role in the interaction of the ribosome with GTP-bound translation factors. The sequence is that of Large ribosomal subunit protein P1 from Sulfolobus acidocaldarius (strain ATCC 33909 / DSM 639 / JCM 8929 / NBRC 15157 / NCIMB 11770).